Here is a 199-residue protein sequence, read N- to C-terminus: NAD(P)H dehydrogenase (quinone) (199 aa).

The Flavodoxin-like domain maps to 4-190 (VLVLYHSMYG…AIARFQGKHV (187 aa)). FMN-binding positions include 10–15 (SMYGHI) and 79–81 (TRF). Y12 contacts NAD(+). W99 lines the substrate pocket. H134 is an FMN binding site.

Belongs to the WrbA family. FMN serves as cofactor.

The catalysed reaction is a quinone + NADH + H(+) = a quinol + NAD(+). The enzyme catalyses a quinone + NADPH + H(+) = a quinol + NADP(+). This chain is NAD(P)H dehydrogenase (quinone), found in Tolumonas auensis (strain DSM 9187 / NBRC 110442 / TA 4).